Consider the following 521-residue polypeptide: Circadian clock oscillator protein KaiC (521 aa).

2 consecutive KaiC domains span residues 1–248 and 262–521; these read MNEP…INIF and ARIS…LDEE. ATP-binding residues include Gly50, Thr51, Gly52, Lys53, Thr54, Leu55, Ser90, Lys225, Leu226, Arg227, Thr229, His231, Thr241, Thr291, Gly292, Thr293, Gly294, Lys295, Thr296, and Leu297. Residue Thr54 coordinates Mg(2+). A Mg(2+)-binding site is contributed by Thr296. Mg(2+) is bound at residue Glu319. Residue Trp332 coordinates ATP. Phosphoserine; by autocatalysis is present on Ser432. Thr433 is subject to Phosphothreonine; by autocatalysis. The ATP site is built by Arg452, Lys458, Met459, Arg460, Ser462, His464, and Lys466.

The protein belongs to the KaiC family. As to quaternary structure, homohexamer; hexamerization is dependent on ATP-binding. The KaiABC complex composition changes during the circadian cycle to control KaiC phosphorylation. Complexes KaiC(6), KaiA(2-4):KaiC(6), KaiB(6):KaiC(6) and KaiC(6):KaiB(6):KaiA(12) are among the most important forms, many form cooperatively. KaiC interacts with SasA, activating its autokinase function and leading to RpaA activation. It depends on Mg(2+) as a cofactor. Post-translationally, phosphorylated on serine and threonine residues by autocatalysis. Has a 4 step phosphorylation cycle; the autokinase acts first on Thr-433, then Ser-432. When Ser-432 is modified KaiC switches to an autophosphatase mode, acting first on phospho-Thr-433 then phospho-Ser-432.

The enzyme catalyses L-seryl-[protein] + ATP = O-phospho-L-seryl-[protein] + ADP + H(+). It catalyses the reaction L-threonyl-[protein] + ATP = O-phospho-L-threonyl-[protein] + ADP + H(+). The catalysed reaction is ATP + H2O = ADP + phosphate + H(+). With respect to regulation, the interaction with KaiA enhances its phosphorylation status, while the interaction with KaiB decreases it. Its function is as follows. Central component of the KaiABC oscillator complex, which constitutes the main circadian regulator in cyanobacteria. Complex composition changes during the circadian cycle to control KaiC phosphorylation. KaiA stimulates KaiC autophosphorylation, while KaiB sequesters KaiA, leading to KaiC autodephosphorylation. Clock output pathways impact the RpaA transcriptional regulator. KaiC enhances the autophosphorylation activity of SasA, which then transfers its phosphate group to RpaA to activate it. KaiB and KaiC together enhance the phospho-RpaA dephosphatase activity of CikA. Has a weak, temperature-independent ATPase activity; ATPase activity defines the circadian period. The phosphorylation state of KaiC modulates its ATPase activity and effects KaiB binding. The sequence is that of Circadian clock oscillator protein KaiC from Rippkaea orientalis (strain PCC 8801 / RF-1) (Cyanothece sp. (strain PCC 8801)).